A 63-amino-acid polypeptide reads, in one-letter code: Large ribosomal subunit protein bL28 (63 aa).

Positions 1 to 22 (MSRRCAITGKSAMNGHSVSHAN) are disordered.

This sequence belongs to the bacterial ribosomal protein bL28 family.

The sequence is that of Large ribosomal subunit protein bL28 from Campylobacter hominis (strain ATCC BAA-381 / DSM 21671 / CCUG 45161 / LMG 19568 / NCTC 13146 / CH001A).